Consider the following 301-residue polypeptide: tRNA uridine(34) hydroxylase (301 aa).

A Rhodanese domain is found at Arg-121–Ser-215. The Cysteine persulfide intermediate role is filled by Cys-175.

It belongs to the TrhO family.

It catalyses the reaction uridine(34) in tRNA + AH2 + O2 = 5-hydroxyuridine(34) in tRNA + A + H2O. Its function is as follows. Catalyzes oxygen-dependent 5-hydroxyuridine (ho5U) modification at position 34 in tRNAs. The protein is tRNA uridine(34) hydroxylase of Ruegeria pomeroyi (strain ATCC 700808 / DSM 15171 / DSS-3) (Silicibacter pomeroyi).